Reading from the N-terminus, the 380-residue chain is Tryptophan 2,3-dioxygenase (380 aa).

Substrate-binding positions include 57-61 (FIITH) and R128. H313 contributes to the heme binding site. T328 contacts substrate.

Belongs to the tryptophan 2,3-dioxygenase family. As to quaternary structure, homotetramer. Dimer of dimers. Heme serves as cofactor.

It carries out the reaction L-tryptophan + O2 = N-formyl-L-kynurenine. Its pathway is amino-acid degradation; L-tryptophan degradation via kynurenine pathway; L-kynurenine from L-tryptophan: step 1/2. It functions in the pathway pigment biosynthesis; ommochrome biosynthesis. In terms of biological role, heme-dependent dioxygenase that catalyzes the oxidative cleavage of the L-tryptophan (L-Trp) pyrrole ring and converts L-tryptophan to N-formyl-L-kynurenine. Catalyzes the oxidative cleavage of the indole moiety. This chain is Tryptophan 2,3-dioxygenase, found in Drosophila ananassae (Fruit fly).